The primary structure comprises 422 residues: Ferrochelatase, mitochondrial (422 aa).

Residues 1–53 constitute a mitochondrion transit peptide; sequence MLSASANMAAALRAAGALLREPLVHGSSRACQPWRCQSGAAVAATTEKVHHAK. N6-acetyllysine is present on Lys-56. 3 residues coordinate protoporphyrin IX: Arg-114, Tyr-122, and Ser-129. Lys-137 bears the N6-succinyllysine mark. Cys-195 is a binding site for [2Fe-2S] cluster. Residue His-229 is part of the active site. N6-acetyllysine; alternate is present on Lys-289. Residue Lys-289 is modified to N6-succinyllysine; alternate. Residue Asp-382 is part of the active site. Cys-402, Cys-405, and Cys-410 together coordinate [2Fe-2S] cluster. Lys-414 carries the post-translational modification N6-acetyllysine; alternate. Lys-414 is modified (N6-succinyllysine; alternate).

It belongs to the ferrochelatase family. As to quaternary structure, homodimer. Homotetramer. Interaction with PGRMC1; the interaction results in decreased FECH activity. Interacts with ABCB10 and SLC25A37; this interaction forms an oligomeric complex. Forms a complex with ABCB7 and ABCB10, where a dimeric FECH bridges ABCB7 and ABCB10 homodimers; this complex may be required for cellular iron homeostasis, mitochondrial function and heme biosynthesis. Interacts with ABCB7 and ABCB10. [2Fe-2S] cluster serves as cofactor. Erythroid and hepatic cells.

It is found in the mitochondrion inner membrane. The enzyme catalyses heme b + 2 H(+) = protoporphyrin IX + Fe(2+). It participates in porphyrin-containing compound metabolism; protoheme biosynthesis; protoheme from protoporphyrin-IX: step 1/1. Functionally, catalyzes the ferrous insertion into protoporphyrin IX. This chain is Ferrochelatase, mitochondrial, found in Mus musculus (Mouse).